We begin with the raw amino-acid sequence, 133 residues long: Holo-[acyl-carrier-protein] synthase (133 aa).

Mg(2+)-binding residues include Asp8 and Glu57.

This sequence belongs to the P-Pant transferase superfamily. AcpS family. Mg(2+) serves as cofactor.

It is found in the cytoplasm. It catalyses the reaction apo-[ACP] + CoA = holo-[ACP] + adenosine 3',5'-bisphosphate + H(+). Its function is as follows. Transfers the 4'-phosphopantetheine moiety from coenzyme A to a Ser of acyl-carrier-protein. The polypeptide is Holo-[acyl-carrier-protein] synthase (Bartonella bacilliformis (strain ATCC 35685 / KC583 / Herrer 020/F12,63)).